We begin with the raw amino-acid sequence, 103 residues long: Urease subunit beta (103 aa).

It belongs to the urease beta subunit family. Heterotrimer of UreA (gamma), UreB (beta) and UreC (alpha) subunits. Three heterotrimers associate to form the active enzyme.

Its subcellular location is the cytoplasm. It catalyses the reaction urea + 2 H2O + H(+) = hydrogencarbonate + 2 NH4(+). The protein operates within nitrogen metabolism; urea degradation; CO(2) and NH(3) from urea (urease route): step 1/1. The chain is Urease subunit beta from Streptomyces coelicolor (strain ATCC BAA-471 / A3(2) / M145).